A 56-amino-acid polypeptide reads, in one-letter code: Small ribosomal subunit protein uS14 (56 aa).

Residues C21, C24, C39, and C42 each contribute to the Zn(2+) site.

Belongs to the universal ribosomal protein uS14 family. In terms of assembly, component of the 40S small ribosomal subunit. Zn(2+) is required as a cofactor.

The protein localises to the cytoplasm. Its subcellular location is the cytosol. It is found in the rough endoplasmic reticulum. This Drosophila melanogaster (Fruit fly) protein is Small ribosomal subunit protein uS14 (RpS29).